Consider the following 749-residue polypeptide: MQSLLDGHHHQLPSLLQQHHNGHHLLDQHQQHQHQLPPQATTTSESDGRAPRDELEMSKSGGSDNLESGGGGGGGGSGDDQDPNQRPRKKRYHRHTQHQIQELEAFFKECPHPDDKQRKELSRELGLEPLQVKFWFQNKRTQMKTQHERHENNALRAENEKLRAENMRYKEALANASCPNCGGPAAIGEMSFDEHHLRLENARLRDEIDRISAIAAKYVGKPAAAVSAAYPPLPPSNRSPLDHMGIPGAGADVFGADFDKPLVIELAVAAMEELVRMAQLGEPLWAPALGGEALGEEEYARTFPRGLGPKSPELRSEASRETAVVIMNHVSLVEMLMDVGQWTALFSSIVSRAATLEVLSTGVAGNHNGALQLMSAEFQMPSPLVPTRETQFLRYCKQHPDGTWAVVDVSLDGLRAGAGGGCQPAAARGHRRRPSGCLIQEMPNGYSKVTWVEHVEADDQMVHNLYKPVVNSGMAFGARRWVATLERQCERLASAMASNVASSGDAGVITTSEGRRSMLKLAERMVASFCGGVTASTTHQWTTLSGSGAEDVRVMTRKSVDDPGRPPGIVLNAATSFWLPVPPSRVFDFLRDDSTRSEWDILSNGGVVQEMAHIANGRDHGNAVSLLRVNNANSNQSNMLILQECCTDATGSYVIYAPVDVVAMNVVLNGGDPDYVALLPSGFAILPDGPDGGGGSLLTVAFQILVDSVPTAKLSLGSVATVNSLIACTVERIKAAITGDNGVAPPCPR.

The disordered stretch occupies residues 26 to 98; it reads LDQHQQHQHQ…KKRYHRHTQH (73 aa). Residues 46-57 are compositionally biased toward basic and acidic residues; that stretch reads SDGRAPRDELEM. Positions 68–78 are enriched in gly residues; the sequence is SGGGGGGGGSG. A compositionally biased stretch (basic residues) spans 86–97; that stretch reads RPRKKRYHRHTQ. Positions 88 to 147 form a DNA-binding region, homeobox; that stretch reads RKKRYHRHTQHQIQELEAFFKECPHPDDKQRKELSRELGLEPLQVKFWFQNKRTQMKTQH. Residues 137–218 are a coiled coil; the sequence is QNKRTQMKTQ…DRISAIAAKY (82 aa). The START domain maps to 256–494; sequence ADFDKPLVIE…LERQCERLAS (239 aa).

It belongs to the HD-ZIP homeobox family. Class IV subfamily.

The protein resides in the nucleus. Functionally, probable transcription factor. This is Homeobox-leucine zipper protein ROC7 (ROC7) from Oryza sativa subsp. indica (Rice).